Consider the following 571-residue polypeptide: Proline--tRNA ligase (571 aa).

Belongs to the class-II aminoacyl-tRNA synthetase family. ProS type 1 subfamily. In terms of assembly, homodimer.

Its subcellular location is the cytoplasm. It carries out the reaction tRNA(Pro) + L-proline + ATP = L-prolyl-tRNA(Pro) + AMP + diphosphate. In terms of biological role, catalyzes the attachment of proline to tRNA(Pro) in a two-step reaction: proline is first activated by ATP to form Pro-AMP and then transferred to the acceptor end of tRNA(Pro). As ProRS can inadvertently accommodate and process non-cognate amino acids such as alanine and cysteine, to avoid such errors it has two additional distinct editing activities against alanine. One activity is designated as 'pretransfer' editing and involves the tRNA(Pro)-independent hydrolysis of activated Ala-AMP. The other activity is designated 'posttransfer' editing and involves deacylation of mischarged Ala-tRNA(Pro). The misacylated Cys-tRNA(Pro) is not edited by ProRS. The polypeptide is Proline--tRNA ligase (Pseudomonas aeruginosa (strain LESB58)).